The chain runs to 30 residues: DCLPGWSSHEGHCYKVFNQEMYWADAEKFC.

Residues 1–30 form the C-type lectin domain; sequence DCLPGWSSHEGHCYKVFNQEMYWADAEKFC. The cysteines at positions 2 and 13 are disulfide-linked.

This sequence belongs to the snaclec family. As to quaternary structure, heterodimer of a metalloproteinase subunit and a regulatory subunit comprising two polypeptides disulfide-linked (14 kDa and 17 kDa chains). As to expression, expressed by the venom gland.

It is found in the secreted. Calcium-dependent prothrombin activator. This protein may activate prothrombin via recognition by the regulatory subunit of the calcium ion bound conformation of its gamma-carboxyglutamic acid (GLA) domain, and the subsequent conversion of prothrombin to active thrombin is catalyzed by the catalytic subunit. In Echis carinatus (Saw-scaled viper), this protein is Snaclec carinactivase-1 regulatory subunit 17 kDa chain.